Here is a 429-residue protein sequence, read N- to C-terminus: 3-phosphoshikimate 1-carboxyvinyltransferase (429 aa).

3-phosphoshikimate-binding residues include Lys-23, Ser-24, and Arg-28. A phosphoenolpyruvate-binding site is contributed by Lys-23. The phosphoenolpyruvate site is built by Gly-95 and Arg-123. 3-phosphoshikimate contacts are provided by Ser-168, Gln-170, Asp-316, and Lys-343. Gln-170 is a binding site for phosphoenolpyruvate. Residue Asp-316 is the Proton acceptor of the active site. Phosphoenolpyruvate is bound by residues Arg-347 and Arg-389.

The protein belongs to the EPSP synthase family. In terms of assembly, monomer.

Its subcellular location is the cytoplasm. It carries out the reaction 3-phosphoshikimate + phosphoenolpyruvate = 5-O-(1-carboxyvinyl)-3-phosphoshikimate + phosphate. It functions in the pathway metabolic intermediate biosynthesis; chorismate biosynthesis; chorismate from D-erythrose 4-phosphate and phosphoenolpyruvate: step 6/7. Catalyzes the transfer of the enolpyruvyl moiety of phosphoenolpyruvate (PEP) to the 5-hydroxyl of shikimate-3-phosphate (S3P) to produce enolpyruvyl shikimate-3-phosphate and inorganic phosphate. The polypeptide is 3-phosphoshikimate 1-carboxyvinyltransferase (Bacillus thuringiensis subsp. konkukian (strain 97-27)).